The following is a 454-amino-acid chain: Lipase member H (454 aa).

The first 23 residues, 1–23 (MIYRKIIWGILYVTLMLFDTHRA), serve as a signal peptide directing secretion. Asparagine 73, asparagine 137, and asparagine 151 each carry an N-linked (GlcNAc...) asparagine glycan. Serine 161 (nucleophile) is an active-site residue. Residue aspartate 185 is the Charge relay system of the active site. Cysteine 240 and cysteine 253 are oxidised to a cystine. Catalysis depends on histidine 255, which acts as the Charge relay system. N-linked (GlcNAc...) asparagine glycosylation occurs at asparagine 267. Intrachain disulfides connect cysteine 277–cysteine 288 and cysteine 291–cysteine 299. An N-linked (GlcNAc...) asparagine glycan is attached at asparagine 358. An intrachain disulfide couples cysteine 430 to cysteine 449.

This sequence belongs to the AB hydrolase superfamily. Lipase family.

Its subcellular location is the secreted. It localises to the cell membrane. It catalyses the reaction 1-hexadecanoyl-2-(9Z-octadecenoyl)-sn-glycero-3-phosphate + H2O = 2-(9Z-octadecenoyl)-sn-glycero-3-phosphate + hexadecanoate + H(+). Hydrolyzes specifically phosphatidic acid (PA) to produce 2-acyl lysophosphatidic acid (LPA; a potent bioactive lipid mediator) and fatty acid. Does not hydrolyze other phospholipids, like phosphatidylserine (PS), phosphatidylcholine (PC) and phosphatidylethanolamine (PE) or triacylglycerol (TG). The chain is Lipase member H (liph) from Danio rerio (Zebrafish).